Here is a 66-residue protein sequence, read N- to C-terminus: Toxin Boma6a (66 aa).

In terms of domain architecture, LCN-type CS-alpha/beta spans 2-64; that stretch reads RDAYIAQNYN…VPIKVEGKCH (63 aa). 4 disulfide bridges follow: cysteine 12/cysteine 63, cysteine 16/cysteine 36, cysteine 22/cysteine 46, and cysteine 26/cysteine 48.

It belongs to the long (4 C-C) scorpion toxin superfamily. Sodium channel inhibitor family. Alpha subfamily. In terms of tissue distribution, expressed by the venom gland.

It is found in the secreted. Alpha toxins bind voltage-independently at site-3 of sodium channels (Nav) and inhibit the inactivation of the activated channels, thereby blocking neuronal transmission. The polypeptide is Toxin Boma6a (Buthus occitanus mardochei (Moroccan scorpion)).